The following is a 214-amino-acid chain: YPESIDWREKGAVTPVKNQNPCGSCWAFSTVATIEGINKIITGQLISLSEQELLDCEYRSHGCDGGYQTPSLQYVVDNGVHTEREYPYEKKQGRCRAKDKKGPKVYITGYKYVPANDEISLIQAIANQPVSVVTDSRGRGFQFYKGGIYEGPCGTNTDHAVTAVGYGKTYLLLKNSWGPNWGEKGYIRIKRASGRSKGTCGVYTSSFFPIKGYR.

Cystine bridges form between Cys22-Cys63, Cys56-Cys95, and Cys153-Cys200. Cys25 is an active-site residue. Cys25 contacts E64. Residues His159 and Asn175 contribute to the active site.

It belongs to the peptidase C1 family. Expressed in latex.

The protein resides in the secreted. Functionally, cysteine protease. This chain is Mexicain, found in Jacaratia mexicana (Wild papaya).